The chain runs to 400 residues: DNA primase large subunit PriL (400 aa).

Cys-247, Cys-356, Cys-367, and Cys-373 together coordinate [4Fe-4S] cluster.

It belongs to the eukaryotic-type primase large subunit family. In terms of assembly, heterodimer of a small subunit (PriS) and a large subunit (PriL). It depends on [4Fe-4S] cluster as a cofactor.

In terms of biological role, regulatory subunit of DNA primase, an RNA polymerase that catalyzes the synthesis of short RNA molecules used as primers for DNA polymerase during DNA replication. Stabilizes and modulates the activity of the small subunit, increasing the rate of DNA synthesis, and conferring RNA synthesis capability. The DNA polymerase activity may enable DNA primase to also catalyze primer extension after primer synthesis. May also play a role in DNA repair. The sequence is that of DNA primase large subunit PriL from Thermococcus kodakarensis (strain ATCC BAA-918 / JCM 12380 / KOD1) (Pyrococcus kodakaraensis (strain KOD1)).